Consider the following 139-residue polypeptide: Large ribosomal subunit protein uL16 (139 aa).

It belongs to the universal ribosomal protein uL16 family. In terms of assembly, part of the 50S ribosomal subunit.

Its function is as follows. Binds 23S rRNA and is also seen to make contacts with the A and possibly P site tRNAs. This Chlorobium phaeobacteroides (strain DSM 266 / SMG 266 / 2430) protein is Large ribosomal subunit protein uL16.